A 404-amino-acid polypeptide reads, in one-letter code: Probable sugar efflux transporter (404 aa).

A run of 12 helical transmembrane segments spans residues 15-35 (VITFALAGFVFNTTEFIPVAL), 51-71 (GLIITVYAWVVSLMSLPFMLL), 85-105 (LVLFILSHLLSVIAWDFWVLV), 109-129 (IGVALTHSIFWAITASLVIRV), 137-157 (QAIGLLAIGCSLAMILGLPLG), 168-188 (ATFAIIALIAIGILCLFYQLL), 209-229 (PLLLGLYALTMIIISAHFTAY), 245-265 (SMATFVLFVFGLSGITASLLF), 276-296 (FILFSMGLLTATLLLLFIASQ), 299-319 (WTMFLLTFFWGIGIAGIGLGL), 333-353 (VAMAIYSGIYNIGIGAGALLG), and 363-383 (AYIGVAGALFAVFGLVLFILV).

The protein belongs to the major facilitator superfamily. SotB (TC 2.A.1.2) family.

The protein localises to the cell inner membrane. Functionally, involved in the efflux of sugars. The physiological role may be the reduction of the intracellular concentration of toxic sugars or sugar metabolites. The sequence is that of Probable sugar efflux transporter from Pasteurella multocida (strain Pm70).